A 96-amino-acid chain; its full sequence is Venom protein 3.1 (96 aa).

An N-terminal signal peptide occupies residues 1–25; it reads MKFSLISVFLFAVFLSNENIFQAIA. The disordered stretch occupies residues 45 to 84; it reads EAVMSSSLTNEEESRNWPHRATRNTLEKGQKRSPAARSEI.

The protein belongs to the non-disulfide-bridged peptide (NDBP) superfamily. In terms of tissue distribution, expressed by the venom gland.

It is found in the secreted. The polypeptide is Venom protein 3.1 (Lychas mucronatus (Chinese swimming scorpion)).